We begin with the raw amino-acid sequence, 989 residues long: AP-2 complex subunit alpha-2 (989 aa).

HEAT repeat units follow at residues 112–149, 188–225, 368–402, and 403–440; these read EMLPLIINSFKEDLLARSDYFQSLALAAICNIGGKEVA, VTPDSWVERLVSVLDEPDFGVLTSLMSLLIELASENPI, IMIKKYQDTVLLSLKDSDISIRRRALDLLYGMCDK, and NTCKHIVAELLSYLQTADYAIREELVIKIANLAEKFAS. The segment at 610–745 is disordered; it reads DNSNTTSNTA…SSSPISSGGS (136 aa). Residues 611–623 show a composition bias toward low complexity; that stretch reads NSNTTSNTANNSN. A compositionally biased stretch (polar residues) spans 624–638; it reads MINSQDSKISSGGFN. Low complexity predominate over residues 639-703; the sequence is QSPQPSQQQQ…QPVYQQQQQA (65 aa). The segment covering 704–714 has biased composition (polar residues); that stretch reads ESFSPVQSDTV. The span at 715-745 shows a compositional bias: low complexity; that stretch reads SSFGQQQQQQQGGFSSPTIQASSSPISSGGS.

This sequence belongs to the adaptor complexes large subunit family. Adaptor protein complex 2 (AP-2) is a heterotetramer composed of two large adaptins (alpha-type and beta-type subunits), a medium adaptin (mu-type subunit AP50) and a small adaptin (sigma-type subunit AP17).

Its subcellular location is the cell membrane. It is found in the membrane. The protein resides in the coated pit. In terms of biological role, component of the adaptor complexes which link clathrin to receptors in coated vesicles. Clathrin-associated protein complexes are believed to interact with the cytoplasmic tails of membrane proteins, leading to their selection and concentration. The protein is AP-2 complex subunit alpha-2 (ap2a1-1) of Dictyostelium discoideum (Social amoeba).